The sequence spans 274 residues: Large ribosomal subunit protein uL2 (274 aa).

The tract at residues 223–265 (VVMNPVDHPHGGGEGRTSGGRHPVSPWGVPTKGYKTRSNKRTD) is disordered.

It belongs to the universal ribosomal protein uL2 family. Part of the 50S ribosomal subunit. Forms a bridge to the 30S subunit in the 70S ribosome.

Its function is as follows. One of the primary rRNA binding proteins. Required for association of the 30S and 50S subunits to form the 70S ribosome, for tRNA binding and peptide bond formation. It has been suggested to have peptidyltransferase activity; this is somewhat controversial. Makes several contacts with the 16S rRNA in the 70S ribosome. This chain is Large ribosomal subunit protein uL2, found in Vibrio vulnificus (strain CMCP6).